A 711-amino-acid chain; its full sequence is Polyribonucleotide nucleotidyltransferase (711 aa).

Residues Asp-491 and Asp-497 each coordinate Mg(2+). The region spanning 559–618 (PRLITIKINPEKIRDVIGKGGAVIRALTEETGTQIDISDEGVVTIASVDAAAGQEAKRRI) is the KH domain. The S1 motif domain occupies 628 to 696 (GKIYEGTVLK…DRGRLKLSMK (69 aa)).

Belongs to the polyribonucleotide nucleotidyltransferase family. Mg(2+) serves as cofactor.

It localises to the cytoplasm. It catalyses the reaction RNA(n+1) + phosphate = RNA(n) + a ribonucleoside 5'-diphosphate. Its function is as follows. Involved in mRNA degradation. Catalyzes the phosphorolysis of single-stranded polyribonucleotides processively in the 3'- to 5'-direction. The polypeptide is Polyribonucleotide nucleotidyltransferase (Janthinobacterium sp. (strain Marseille) (Minibacterium massiliensis)).